Consider the following 277-residue polypeptide: ATP synthase subunit delta (277 aa).

This sequence belongs to the ATPase delta chain family. F-type ATPases have 2 components, F(1) - the catalytic core - and F(0) - the membrane proton channel. F(1) has five subunits: alpha(3), beta(3), gamma(1), delta(1), epsilon(1). F(0) has three main subunits: a(1), b(2) and c(10-14). The alpha and beta chains form an alternating ring which encloses part of the gamma chain. F(1) is attached to F(0) by a central stalk formed by the gamma and epsilon chains, while a peripheral stalk is formed by the delta and b chains.

It is found in the cell membrane. F(1)F(0) ATP synthase produces ATP from ADP in the presence of a proton or sodium gradient. F-type ATPases consist of two structural domains, F(1) containing the extramembraneous catalytic core and F(0) containing the membrane proton channel, linked together by a central stalk and a peripheral stalk. During catalysis, ATP synthesis in the catalytic domain of F(1) is coupled via a rotary mechanism of the central stalk subunits to proton translocation. Functionally, this protein is part of the stalk that links CF(0) to CF(1). It either transmits conformational changes from CF(0) to CF(1) or is implicated in proton conduction. The sequence is that of ATP synthase subunit delta from Bifidobacterium animalis subsp. lactis (strain AD011).